The chain runs to 911 residues: Brevican core protein (911 aa).

An N-terminal signal peptide occupies residues 1–22 (MAQLFLPLLAALVLAQAPAALA). Positions 36 to 155 (RVRIAGDAPL…SSDAVEVKVK (120 aa)) constitute an Ig-like V-type domain. 5 disulfides stabilise this stretch: cysteine 57–cysteine 137, cysteine 179–cysteine 250, cysteine 203–cysteine 224, cysteine 277–cysteine 352, and cysteine 301–cysteine 322. The N-linked (GlcNAc...) asparagine glycan is linked to asparagine 130. Link domains are found at residues 157–252 (VVFL…YCYA) and 257–354 (GELF…YCFR). N-linked (GlcNAc...) asparagine glycosylation occurs at asparagine 337. Positions 391–641 (QLPQEATESE…PTDSASRGGV (251 aa)) are disordered. Serine 418 carries the phosphoserine modification. Residue serine 418 is glycosylated (O-linked (Xyl...) (chondroitin sulfate) serine). Residues 454–478 (EEEEKYEDEEEKEEEEEEEEVEDEA) are compositionally biased toward acidic residues. O-glycosylated at two sites stretches follow at residues 520 to 530 (SPLPDGESEAS) and 540 to 545 (TETLPT). Positions 569–575 (TGGPELS) are O-glycosylated at one site. Polar residues predominate over residues 612–627 (EDNSGRTAPAGTSVQA). A lipid anchor (GPI-anchor amidated alanine) is attached at alanine 646. The region spanning 646 to 682 (ASGDCVPSPCHNGGTCLEEEEGVRCLCLPGYGGDLCD) is the EGF-like domain. Cystine bridges form between cysteine 650–cysteine 661, cysteine 655–cysteine 670, cysteine 672–cysteine 681, cysteine 688–cysteine 699, cysteine 716–cysteine 808, cysteine 784–cysteine 800, cysteine 815–cysteine 858, and cysteine 844–cysteine 871. The C-type lectin domain maps to 695 to 809 (FQGACYKHFS…CNYHLSYTCK (115 aa)). A Sushi domain is found at 813-873 (VSCGPPPELP…WEAPQISCVP (61 aa)). Serine 905 and serine 906 each carry an O-linked (GalNAc...) serine glycan.

It belongs to the aggrecan/versican proteoglycan family. As to quaternary structure, interacts with TNR. In terms of processing, O-glycosylated; contains chondroitin sulfate. O-glycosylated with a core 1 or possibly core 8 glycan. Expressed in the retina, specifically in the inner nuclear layer, inner plexiform layer and ganglion cell layer (at protein level). Detected in cerebrospinal fluid (at protein level). Detected in urine (at protein level).

The protein resides in the secreted. It is found in the extracellular space. Its subcellular location is the extracellular matrix. It localises to the membrane. Its function is as follows. May play a role in the terminally differentiating and the adult nervous system during postnatal development. Could stabilize interactions between hyaluronan (HA) and brain proteoglycans. This chain is Brevican core protein (BCAN), found in Homo sapiens (Human).